Consider the following 98-residue polypeptide: Acylphosphatase (98 aa).

The 87-residue stretch at 10–96 (ARLLRIRGRV…TDGAGFDCLP (87 aa)) folds into the Acylphosphatase-like domain. Residues Arg-25 and Asn-43 contribute to the active site.

The protein belongs to the acylphosphatase family.

It catalyses the reaction an acyl phosphate + H2O = a carboxylate + phosphate + H(+). This chain is Acylphosphatase (acyP), found in Azoarcus sp. (strain BH72).